Here is a 239-residue protein sequence, read N- to C-terminus: Norbelladine 4'-O-methyltransferase 3 (239 aa).

Residues Val-55, Glu-77, 79–80 (GV), Ser-85, Asp-103, and Ala-132 each bind S-adenosyl-L-methionine. Residue Asp-155 coordinates a divalent metal cation. Asp-157 lines the S-adenosyl-L-methionine pocket. Residues Asp-181 and Asn-182 each contribute to the a divalent metal cation site.

It belongs to the class I-like SAM-binding methyltransferase superfamily. Cation-dependent O-methyltransferase family. Mg(2+) serves as cofactor.

It carries out the reaction norbelladine + S-adenosyl-L-methionine = 4'-O-methylnorbelladine + S-adenosyl-L-homocysteine + H(+). It participates in alkaloid biosynthesis. In terms of biological role, 4'-O-methyltransferase converting norbelladine to 4'-O-methylnorbelladine. 4'-O-methylnorbelladine is a precursor to all Amaryllidaceae alkaloids such as galanthamine, lycorine and haemanthamine, and including haemanthamine- and crinamine-type alkaloids, promising anticancer agents. The polypeptide is Norbelladine 4'-O-methyltransferase 3 (Narcissus aff. pseudonarcissus MK-2014 (Daffodil)).